The following is a 309-amino-acid chain: MKKWTFDEAKEIFSFSFMELVYQAQTIHRANFDPNKIQISSLLSIKTGSCPENCKFCPQSSHYKTYVKKEPLMQIEDVITAAKRAKAAGSTRFCMGAAWRGPRDEDLKLVCEMIKEVKKLGLETCVTLGLLKEHQAVTLKEAGLDFYNHNIDTSEEFYNKIITTRTFQDRLDTLRYVRASGMKVCCGGILGMGETNDDRINMILTLANLEEPAESVTINKLIKIPGTPLENVQDIDPFDFVRVIALARIMIPKSYIRLSAGREQMSDELQALCIMAGVYSIFYGEKILTSANPMPERDNDLFQKLGIIH.

The Radical SAM core domain maps to 35 to 259 (NKIQISSLLS…MIPKSYIRLS (225 aa)). Positions 50, 54, and 57 each coordinate [4Fe-4S] cluster. Positions 94, 125, 185, and 257 each coordinate [2Fe-2S] cluster.

Belongs to the radical SAM superfamily. Biotin synthase family. Homodimer. [4Fe-4S] cluster is required as a cofactor. [2Fe-2S] cluster serves as cofactor.

The enzyme catalyses (4R,5S)-dethiobiotin + (sulfur carrier)-SH + 2 reduced [2Fe-2S]-[ferredoxin] + 2 S-adenosyl-L-methionine = (sulfur carrier)-H + biotin + 2 5'-deoxyadenosine + 2 L-methionine + 2 oxidized [2Fe-2S]-[ferredoxin]. It participates in cofactor biosynthesis; biotin biosynthesis; biotin from 7,8-diaminononanoate: step 2/2. In terms of biological role, catalyzes the conversion of dethiobiotin (DTB) to biotin by the insertion of a sulfur atom into dethiobiotin via a radical-based mechanism. The polypeptide is Biotin synthase (Rickettsia felis (strain ATCC VR-1525 / URRWXCal2) (Rickettsia azadi)).